A 173-amino-acid chain; its full sequence is Probable DNA-directed RNA polymerase subunit delta (173 aa).

One can recognise an HTH HARE-type domain in the interval 14–81 (NSFIDLAYMA…GEYMWGLRDW (68 aa)). Residues 113–173 (LLGEDEVEDE…DEFDDEEEEE (61 aa)) are disordered. Residues 115-173 (GEDEVEDELDLLPSDGDEENVDTEDEEVEDELDEAGLVVEPDEEFEDEEDEFDDEEEEE) show a composition bias toward acidic residues.

Belongs to the RpoE family. RNAP is composed of a core of 2 alpha, a beta and a beta' subunits. The core is associated with a delta subunit and one of several sigma factors.

Functionally, participates in both the initiation and recycling phases of transcription. In the presence of the delta subunit, RNAP displays an increased specificity of transcription, a decreased affinity for nucleic acids, and an increased efficiency of RNA synthesis because of enhanced recycling. The chain is Probable DNA-directed RNA polymerase subunit delta from Macrococcus caseolyticus (strain JCSC5402) (Macrococcoides caseolyticum).